The sequence spans 267 residues: Membrane-spanning 4-domains subfamily A member 10 (267 aa).

Residues Met-1 to Lys-56 are Cytoplasmic-facing. The chain crosses the membrane as a helical span at residues Leu-57 to Ser-77. The Extracellular portion of the chain corresponds to Thr-78–His-83. Residues Leu-84 to Met-104 form a helical membrane-spanning segment. Residues Ala-105–Lys-118 lie on the Cytoplasmic side of the membrane. The helical transmembrane segment at Val-119–Ile-139 threads the bilayer. The Extracellular portion of the chain corresponds to Ala-140 to Glu-168. The chain crosses the membrane as a helical span at residues Leu-169–Ala-189. Topologically, residues Tyr-190–Lys-267 are cytoplasmic.

Belongs to the MS4A family. As to expression, expressed in thymus, kidney, colon, brain and testis. Expressed also by various hematopoietic and lymphoblastoid cell lines.

It is found in the membrane. Functionally, may be involved in signal transduction as a component of a multimeric receptor complex. This is Membrane-spanning 4-domains subfamily A member 10 (Ms4a10) from Mus musculus (Mouse).